The following is a 526-amino-acid chain: Cytochrome P450 monooxygenase 226 (526 aa).

The helical transmembrane segment at 15-35 (FATSYAALTVAAVTLLAALLV) threads the bilayer. Asn-219, Asn-277, and Asn-320 each carry an N-linked (GlcNAc...) asparagine glycan. Cys-452 contributes to the heme binding site.

It belongs to the cytochrome P450 family. Requires heme as cofactor.

It is found in the membrane. Its pathway is secondary metabolite biosynthesis. In terms of biological role, cytochrome P450 monooxygenase that is able to use anthracene, carbazole and phenanthrene as substrates for oxidation. These multifunctional properties against a series of polycyclic aromatic hydrocarbons (PAHs) suggest that CYP226 would play important roles, at least in part, in fungal metabolic systems involved in xenobiotic detoxification. This Postia placenta (strain ATCC 44394 / Madison 698-R) (Brown rot fungus) protein is Cytochrome P450 monooxygenase 226.